The sequence spans 495 residues: Leucine aminopeptidase 2 (495 aa).

The first 21 residues, 1–21, serve as a signal peptide directing secretion; sequence MKSQLLSLAVAVTTISQGVVG. Positions 124–218 constitute a PA domain; it reads PPASKIMAEL…EDGKNLATLV (95 aa). N-linked (GlcNAc...) asparagine glycans are attached at residues Asn142 and Asn235. Zn(2+)-binding residues include His259 and Asp271. A glycan (N-linked (GlcNAc...) asparagine) is linked at Asn272. The active-site Proton acceptor is Glu303. The Zn(2+) site is built by Glu304 and Asp332. A glycan (N-linked (GlcNAc...) asparagine) is linked at Asn352. His430 is a Zn(2+) binding site.

It belongs to the peptidase M28 family. M28A subfamily. In terms of assembly, monomer. Requires Zn(2+) as cofactor.

It is found in the secreted. With respect to regulation, activity is inhibited by EDTA, o-phenanthroline, bestatin and amastatin. Functionally, extracellular aminopeptidase that releases a wide variety of amino acids from natural peptides and contributes to pathogenicity. This Trichophyton rubrum (Athlete's foot fungus) protein is Leucine aminopeptidase 2 (LAP2).